We begin with the raw amino-acid sequence, 217 residues long: Small ribosomal subunit protein uS3c (217 aa).

The KH type-2 domain maps to 47 to 119 (VRTHIKSSSN…KLHIAIEKVA (73 aa)).

The protein belongs to the universal ribosomal protein uS3 family. In terms of assembly, part of the 30S ribosomal subunit.

The protein resides in the plastid. It localises to the chloroplast. The polypeptide is Small ribosomal subunit protein uS3c (rps3) (Pinus thunbergii (Japanese black pine)).